Reading from the N-terminus, the 839-residue chain is Protein translocase subunit SecA (839 aa).

ATP is bound by residues glutamine 85, 103-107, and aspartate 493; that span reads GEGKT. A compositionally biased stretch (basic and acidic residues) spans 780–790; it reads QIHEQERERAS. Residues 780 to 839 form a disordered region; that stretch reads QIHEQERERASQRATTAAPQNIQSQQSANTDDLPKVERNEACPCGSGKKFKNCHGRKSFS. A compositionally biased stretch (polar residues) spans 791 to 809; it reads QRATTAAPQNIQSQQSANT. Cysteine 821, cysteine 823, cysteine 832, and histidine 833 together coordinate Zn(2+). The segment covering 827–839 has biased composition (basic residues); that stretch reads KKFKNCHGRKSFS.

The protein belongs to the SecA family. Monomer and homodimer. Part of the essential Sec protein translocation apparatus which comprises SecA, SecYEG and auxiliary proteins SecDF. Other proteins may also be involved. Zn(2+) is required as a cofactor.

The protein localises to the cell membrane. It is found in the cytoplasm. It carries out the reaction ATP + H2O + cellular proteinSide 1 = ADP + phosphate + cellular proteinSide 2.. Its function is as follows. Part of the Sec protein translocase complex. Interacts with the SecYEG preprotein conducting channel. Has a central role in coupling the hydrolysis of ATP to the transfer of proteins into and across the cell membrane, serving as an ATP-driven molecular motor driving the stepwise translocation of polypeptide chains across the membrane. The protein is Protein translocase subunit SecA of Streptococcus pyogenes serotype M6 (strain ATCC BAA-946 / MGAS10394).